A 178-amino-acid chain; its full sequence is Ribosomal RNA small subunit methyltransferase G (178 aa).

Residues glycine 54, leucine 59, 105–106 (LE), and arginine 120 each bind S-adenosyl-L-methionine.

This sequence belongs to the methyltransferase superfamily. RNA methyltransferase RsmG family.

It localises to the cytoplasm. It carries out the reaction guanosine(527) in 16S rRNA + S-adenosyl-L-methionine = N(7)-methylguanosine(527) in 16S rRNA + S-adenosyl-L-homocysteine. Its function is as follows. Specifically methylates the N7 position of guanine in position 527 of 16S rRNA. In Helicobacter pylori (strain HPAG1), this protein is Ribosomal RNA small subunit methyltransferase G.